The chain runs to 744 residues: Catalase A (744 aa).

Active-site residues include H93 and N166. Position 380 (Y380) interacts with heme.

This sequence belongs to the catalase family. Requires heme as cofactor.

It is found in the peroxisome matrix. The enzyme catalyses 2 H2O2 = O2 + 2 H2O. Catalyzes the degradation of hydrogen peroxide (H(2)O(2)) generated by peroxisomal oxidases to water and oxygen, thereby protecting cells from the toxic effects of hydrogen peroxide. The protein is Catalase A (catA) of Emericella nidulans (strain FGSC A4 / ATCC 38163 / CBS 112.46 / NRRL 194 / M139) (Aspergillus nidulans).